We begin with the raw amino-acid sequence, 231 residues long: Flagellar L-ring protein (231 aa).

A signal peptide spans 1–18; the sequence is MNRYVSVLALSGIAVLAG. A lipid anchor (N-palmitoyl cysteine) is attached at Cys-19. Cys-19 carries the S-diacylglycerol cysteine lipid modification.

The protein belongs to the FlgH family. The basal body constitutes a major portion of the flagellar organelle and consists of four rings (L,P,S, and M) mounted on a central rod.

Its subcellular location is the cell outer membrane. The protein resides in the bacterial flagellum basal body. Its function is as follows. Assembles around the rod to form the L-ring and probably protects the motor/basal body from shearing forces during rotation. This chain is Flagellar L-ring protein, found in Pseudomonas fluorescens (strain SBW25).